The primary structure comprises 368 residues: Peptide chain release factor 2 (368 aa).

The residue at position 250 (Q250) is an N5-methylglutamine.

Belongs to the prokaryotic/mitochondrial release factor family. Methylated by PrmC. Methylation increases the termination efficiency of RF2.

The protein resides in the cytoplasm. Peptide chain release factor 2 directs the termination of translation in response to the peptide chain termination codons UGA and UAA. This Chlamydia trachomatis serovar L2 (strain ATCC VR-902B / DSM 19102 / 434/Bu) protein is Peptide chain release factor 2.